We begin with the raw amino-acid sequence, 204 residues long: LexA repressor (204 aa).

A DNA-binding region (H-T-H motif) is located at residues 28–48 (RAEIANRLGFKSANAAEEHLK). Catalysis depends on for autocatalytic cleavage activity residues Ser-121 and Lys-158.

It belongs to the peptidase S24 family. As to quaternary structure, homodimer.

The enzyme catalyses Hydrolysis of Ala-|-Gly bond in repressor LexA.. Its function is as follows. Represses a number of genes involved in the response to DNA damage (SOS response), including recA and lexA. In the presence of single-stranded DNA, RecA interacts with LexA causing an autocatalytic cleavage which disrupts the DNA-binding part of LexA, leading to derepression of the SOS regulon and eventually DNA repair. This chain is LexA repressor, found in Shewanella frigidimarina (strain NCIMB 400).